The chain runs to 420 residues: 3-isopropylmalate dehydratase large subunit (420 aa).

[4Fe-4S] cluster-binding residues include cysteine 300, cysteine 360, and cysteine 363.

Belongs to the aconitase/IPM isomerase family. LeuC type 2 subfamily. In terms of assembly, heterodimer of LeuC and LeuD. The cofactor is [4Fe-4S] cluster.

The catalysed reaction is (2R,3S)-3-isopropylmalate = (2S)-2-isopropylmalate. It participates in amino-acid biosynthesis; L-leucine biosynthesis; L-leucine from 3-methyl-2-oxobutanoate: step 2/4. Catalyzes the isomerization between 2-isopropylmalate and 3-isopropylmalate, via the formation of 2-isopropylmaleate. The protein is 3-isopropylmalate dehydratase large subunit of Heliobacterium modesticaldum (strain ATCC 51547 / Ice1).